Consider the following 106-residue polypeptide: Putative membrane protein insertion efficiency factor (106 aa).

It belongs to the UPF0161 family.

The protein resides in the cell inner membrane. In terms of biological role, could be involved in insertion of integral membrane proteins into the membrane. In Acinetobacter baumannii (strain SDF), this protein is Putative membrane protein insertion efficiency factor.